A 234-amino-acid chain; its full sequence is Small ribosomal subunit protein uS3 (234 aa).

In terms of domain architecture, KH type-2 spans 39-107 (IRKFLKKELY…EVSINIKEVK (69 aa)).

The protein belongs to the universal ribosomal protein uS3 family. Part of the 30S ribosomal subunit. Forms a tight complex with proteins S10 and S14.

Functionally, binds the lower part of the 30S subunit head. Binds mRNA in the 70S ribosome, positioning it for translation. The sequence is that of Small ribosomal subunit protein uS3 from Helicobacter pylori (strain G27).